The chain runs to 660 residues: Polyadenylation factor subunit 2 (660 aa).

Basic and acidic residues predominate over residues 1–12 (MSYEPRGDHDKG). The tract at residues 1 to 32 (MSYEPRGDHDKGYGGGGGHDGLPPRNRGRRPV) is disordered. WD repeat units lie at residues 94 to 133 (KIKH…FETI), 136 to 176 (AHDS…ESIR), 177 to 216 (GHTD…TDMT), 219 to 258 (GHGW…CLTT), 261 to 301 (GHKN…DIAL), 304 to 344 (GHEK…TAPD), and 376 to 415 (AHDF…EAPE). Residues 562–660 (KAGYQPPPPP…QSKGNYTRVR (99 aa)) are disordered. The segment covering 566–610 (QPPPPPGSAGAPMPPPGILPPGLIPPPGAAGFPMPPPGFAPPPLI) has biased composition (pro residues).

It localises to the nucleus. Its function is as follows. Required for 3'-end cleavage and polyadenylation of pre-mRNAs. Also involved in chromosome segregation where it has a role in chromosome attachment to the mitotic spindle. The sequence is that of Polyadenylation factor subunit 2 (paa-1) from Neurospora crassa (strain ATCC 24698 / 74-OR23-1A / CBS 708.71 / DSM 1257 / FGSC 987).